We begin with the raw amino-acid sequence, 277 residues long: 2-dehydro-3-deoxyphosphooctonate aldolase (277 aa).

The protein belongs to the KdsA family.

Its subcellular location is the cytoplasm. The catalysed reaction is D-arabinose 5-phosphate + phosphoenolpyruvate + H2O = 3-deoxy-alpha-D-manno-2-octulosonate-8-phosphate + phosphate. The protein operates within carbohydrate biosynthesis; 3-deoxy-D-manno-octulosonate biosynthesis; 3-deoxy-D-manno-octulosonate from D-ribulose 5-phosphate: step 2/3. It participates in bacterial outer membrane biogenesis; lipopolysaccharide biosynthesis. The protein is 2-dehydro-3-deoxyphosphooctonate aldolase of Brucella canis (strain ATCC 23365 / NCTC 10854 / RM-666).